The sequence spans 620 residues: Probably inactive leucine-rich repeat receptor-like protein kinase At5g48380 (620 aa).

The signal sequence occupies residues 1 to 27; that stretch reads MMMGRLVFVIWLYNCLCLLLLSSLVDA. The Extracellular portion of the chain corresponds to 28-228; that stretch reads DQANIDCLRT…SASSSRGKVV (201 aa). N56, N111, N119, and N147 each carry an N-linked (GlcNAc...) asparagine glycan. LRR repeat units lie at residues 101 to 124, 126 to 148, 150 to 172, and 174 to 196; these read DLTG…STLI, LVTI…ISNI, FLNT…LAQL, and RLKT…NQTL. An N-linked (GlcNAc...) asparagine glycan is attached at N193. The helical transmembrane segment at 229–249 threads the bilayer; it reads IIAAVGGLTAAALVVGVVLFF. Topologically, residues 250 to 620 are cytoplasmic; it reads YFRKLGAVRK…DFIEELIVAR (371 aa). The residue at position 300 (T300) is a Phosphothreonine. The region spanning 303–596 is the Protein kinase domain; sequence FKKDNIIATG…RAIGESYNFT (294 aa). ATP contacts are provided by residues 309-317 and K331; that span reads IATGRTGTM. T463 carries the phosphothreonine modification. Y479 is modified (phosphotyrosine). At T482 the chain carries Phosphothreonine.

It belongs to the protein kinase superfamily. Ser/Thr protein kinase family.

Its subcellular location is the cell membrane. The sequence is that of Probably inactive leucine-rich repeat receptor-like protein kinase At5g48380 from Arabidopsis thaliana (Mouse-ear cress).